Reading from the N-terminus, the 170-residue chain is Translocon-associated protein subunit gamma (170 aa).

Topologically, residues 1-24 (MAEVDEFSAFRHENDVSIEQRIVY) are lumenal. The helical transmembrane segment at 25–45 (FINSLIVALVPVYLYHAIFFM) threads the bilayer. The Cytoplasmic segment spans residues 46–51 (SIDDHM). The chain crosses the membrane as a helical span at residues 52-72 (IIYGSVTLFAAIVLTFAYNNI). Over 73–121 (YRMKRLKLSASREHISIASKNKVGDKKKFAAAQKEVQALVTSHEAIAAS) the chain is Lumenal. A helical membrane pass occupies residues 122-141 (IMYNNAVFLICVSIFSFIIF). At 142–145 (KNVP) the chain is on the cytoplasmic side. A helical transmembrane segment spans residues 146–168 (LVYNYIISISLGAGLTSFLSTSS).

Belongs to the TRAP-gamma family. As to quaternary structure, heterotrimer of TRAP-alpha, TRAP-beta and TRAP-gamma.

It is found in the endoplasmic reticulum membrane. Its function is as follows. TRAP proteins are part of a complex whose function is to bind calcium to the ER membrane and thereby regulate the retention of ER resident proteins. The protein is Translocon-associated protein subunit gamma (ssr3) of Dictyostelium discoideum (Social amoeba).